Consider the following 335-residue polypeptide: 3-hydroxyisobutyrate dehydrogenase, mitochondrial (335 aa).

The N-terminal 35 residues, 1–35, are a transit peptide targeting the mitochondrion; that stretch reads MAASLGFRGAASGLWYWSGRRRPVGSLAAVCSRSM. 39–68 provides a ligand contact to NAD(+); it reads TPVGFIGLGNMGNPMAKNLMKHGYPLILYD. 3 positions are modified to N6-acetyllysine; alternate: Lys-59, Lys-75, and Lys-78. 3 positions are modified to N6-succinyllysine; alternate: Lys-59, Lys-75, and Lys-78. Lys-94 is subject to N6-succinyllysine. NAD(+)-binding positions include 102–103 and Asn-107; that span reads LP. Position 120 is an N6-acetyllysine (Lys-120). NAD(+) is bound at residue Thr-133. The residue at position 140 (Lys-140) is an N6-succinyllysine. Residue Lys-144 is modified to N6-acetyllysine. The residue at position 148 (Lys-148) is an N6-acetyllysine; alternate. Lys-148 carries the post-translational modification N6-succinyllysine; alternate. Residue Lys-208 is part of the active site. N6-acetyllysine; alternate is present on residues Lys-237 and Lys-241. N6-succinyllysine; alternate is present on residues Lys-237 and Lys-241. Lys-283 provides a ligand contact to NAD(+). Lys-296 is subject to N6-succinyllysine. The residue at position 320 (Lys-320) is an N6-acetyllysine; alternate. Lys-320 is subject to N6-succinyllysine; alternate.

Belongs to the HIBADH-related family. 3-hydroxyisobutyrate dehydrogenase subfamily. In terms of assembly, homodimer.

It is found in the mitochondrion. It catalyses the reaction 3-hydroxy-2-methylpropanoate + NAD(+) = 2-methyl-3-oxopropanoate + NADH + H(+). It participates in amino-acid degradation; L-valine degradation. This is 3-hydroxyisobutyrate dehydrogenase, mitochondrial (Hibadh) from Mus musculus (Mouse).